Consider the following 439-residue polypeptide: Xylose isomerase (439 aa).

Active-site residues include histidine 101 and aspartate 104. Glutamate 232, glutamate 268, histidine 271, aspartate 296, aspartate 307, aspartate 309, and aspartate 339 together coordinate Mg(2+).

Belongs to the xylose isomerase family. As to quaternary structure, homotetramer. It depends on Mg(2+) as a cofactor.

The protein localises to the cytoplasm. The catalysed reaction is alpha-D-xylose = alpha-D-xylulofuranose. The protein is Xylose isomerase of Yersinia enterocolitica serotype O:8 / biotype 1B (strain NCTC 13174 / 8081).